Consider the following 305-residue polypeptide: Dihydroorotate dehydrogenase B (NAD(+)), catalytic subunit (305 aa).

FMN-binding positions include Ser-23 and 47–48 (KG). Residues Lys-47 and 71–75 (NAIGL) contribute to the substrate site. The FMN site is built by Asn-101 and Asn-129. Asn-129 is a substrate binding site. Cys-132 serves as the catalytic Nucleophile. The FMN site is built by Lys-167 and Ile-193. 194 to 195 (NT) provides a ligand contact to substrate. Residues Gly-219, 245-246 (GG), and 267-268 (GT) each bind FMN.

This sequence belongs to the dihydroorotate dehydrogenase family. Type 1 subfamily. Heterotetramer of 2 PyrK and 2 PyrD type B subunits. FMN is required as a cofactor.

The protein resides in the cytoplasm. The enzyme catalyses (S)-dihydroorotate + NAD(+) = orotate + NADH + H(+). Its pathway is pyrimidine metabolism; UMP biosynthesis via de novo pathway; orotate from (S)-dihydroorotate (NAD(+) route): step 1/1. Functionally, catalyzes the conversion of dihydroorotate to orotate with NAD(+) as electron acceptor. The sequence is that of Dihydroorotate dehydrogenase B (NAD(+)), catalytic subunit (pyrD) from Geobacter sp. (strain M21).